The sequence spans 127 residues: Urotensin-2 (127 aa).

An N-terminal signal peptide occupies residues 1 to 16 (MSKLFFCCLILAGSFC). The propeptide occupies 17–111 (SFRSLPIIVP…RLQSKDRKQF (95 aa)). A disulfide bridge connects residues Cys-121 and Cys-126.

This sequence belongs to the urotensin-2 family. As to expression, central nervous system. Spinal cord.

The protein resides in the secreted. In terms of biological role, involved in smooth muscle stimulating and ion mobilizing activities. It has a suggested role as a corticotropin-releasing factor. The sequence is that of Urotensin-2 (UTS2) from Pelophylax ridibundus (Marsh frog).